A 414-amino-acid polypeptide reads, in one-letter code: Gamma-glutamyl phosphate reductase (414 aa).

It belongs to the gamma-glutamyl phosphate reductase family.

The protein resides in the cytoplasm. The catalysed reaction is L-glutamate 5-semialdehyde + phosphate + NADP(+) = L-glutamyl 5-phosphate + NADPH + H(+). It functions in the pathway amino-acid biosynthesis; L-proline biosynthesis; L-glutamate 5-semialdehyde from L-glutamate: step 2/2. Its function is as follows. Catalyzes the NADPH-dependent reduction of L-glutamate 5-phosphate into L-glutamate 5-semialdehyde and phosphate. The product spontaneously undergoes cyclization to form 1-pyrroline-5-carboxylate. This Kosmotoga olearia (strain ATCC BAA-1733 / DSM 21960 / TBF 19.5.1) protein is Gamma-glutamyl phosphate reductase.